The sequence spans 158 residues: Endoribonuclease YbeY (158 aa).

3 residues coordinate Zn(2+): His-119, His-123, and His-129.

This sequence belongs to the endoribonuclease YbeY family. Zn(2+) is required as a cofactor.

The protein localises to the cytoplasm. In terms of biological role, single strand-specific metallo-endoribonuclease involved in late-stage 70S ribosome quality control and in maturation of the 3' terminus of the 16S rRNA. The protein is Endoribonuclease YbeY of Acinetobacter baumannii (strain AB307-0294).